The following is a 186-amino-acid chain: Adenylate kinase (186 aa).

ATP is bound at residue 12–17 (GAGKGT). Positions 32–61 (STGDLLRAEVNAQSPLGKEAALIMNKGELV) are NMP. AMP is bound by residues threonine 33, arginine 38, 59–61 (ELV), 86–89 (GFPR), and glutamine 93. The interval 127-133 (SRGRSDD) is LID. Arginine 128 contacts ATP. AMP is bound by residues arginine 130 and arginine 141. Position 169 (glycine 169) interacts with ATP.

It belongs to the adenylate kinase family. As to quaternary structure, monomer.

The protein localises to the cytoplasm. The catalysed reaction is AMP + ATP = 2 ADP. It participates in purine metabolism; AMP biosynthesis via salvage pathway; AMP from ADP: step 1/1. Its function is as follows. Catalyzes the reversible transfer of the terminal phosphate group between ATP and AMP. Plays an important role in cellular energy homeostasis and in adenine nucleotide metabolism. The chain is Adenylate kinase from Prochlorococcus marinus (strain MIT 9211).